The chain runs to 1046 residues: Probable inorganic carbon transporter subunit DabA1 (1046 aa).

Zn(2+) contacts are provided by C462, D464, H721, and C736.

The protein belongs to the inorganic carbon transporter (TC 9.A.2) DabA family. As to quaternary structure, forms a complex with DabB1. It depends on Zn(2+) as a cofactor.

It localises to the cell inner membrane. In terms of biological role, part of an energy-coupled inorganic carbon pump. The chain is Probable inorganic carbon transporter subunit DabA1 from Halothiobacillus neapolitanus (strain ATCC 23641 / c2) (Thiobacillus neapolitanus).